The sequence spans 116 residues: Ribosome-binding factor A (116 aa).

The protein belongs to the RbfA family. Monomer. Binds 30S ribosomal subunits, but not 50S ribosomal subunits or 70S ribosomes.

Its subcellular location is the cytoplasm. Its function is as follows. One of several proteins that assist in the late maturation steps of the functional core of the 30S ribosomal subunit. Associates with free 30S ribosomal subunits (but not with 30S subunits that are part of 70S ribosomes or polysomes). Required for efficient processing of 16S rRNA. May interact with the 5'-terminal helix region of 16S rRNA. This chain is Ribosome-binding factor A, found in Streptococcus pneumoniae (strain Hungary19A-6).